We begin with the raw amino-acid sequence, 265 residues long: Urease accessory protein UreH (265 aa).

Belongs to the UreD family. UreH, UreF and UreG form a complex that acts as a GTP-hydrolysis-dependent molecular chaperone, activating the urease apoprotein by helping to assemble the nickel containing metallocenter of UreC. The UreE protein probably delivers the nickel.

The protein localises to the cytoplasm. In terms of biological role, required for maturation of urease via the functional incorporation of the urease nickel metallocenter. The polypeptide is Urease accessory protein UreH (Helicobacter pylori (strain J99 / ATCC 700824) (Campylobacter pylori J99)).